Consider the following 856-residue polypeptide: DNA mismatch repair protein MutS (856 aa).

Residue 615–622 (GPNMGGKS) participates in ATP binding. The span at 798–807 (ETTGHQQAIK) shows a compositional bias: polar residues. The interval 798 to 817 (ETTGHQQAIKNPSKAPREEQ) is disordered.

This sequence belongs to the DNA mismatch repair MutS family.

Its function is as follows. This protein is involved in the repair of mismatches in DNA. It is possible that it carries out the mismatch recognition step. This protein has a weak ATPase activity. In Photobacterium profundum (strain SS9), this protein is DNA mismatch repair protein MutS.